The primary structure comprises 1538 residues: Dicer-like protein 1 (1538 aa).

A disordered region spans residues 39–72 (DPAESSADVHKDEHSSDNSDNDNEAVPKPNDFSQ). Positions 45–55 (ADVHKDEHSSD) are enriched in basic and acidic residues. The Helicase ATP-binding domain occupies 134–315 (LFERAKTQNT…EAATRLETLL (182 aa)). ATP is bound at residue 147-154 (LDTGSGKT). Residues 260–263 (DEAH) carry the DEAH box motif. Positions 460–619 (ELSKHFSDTT…ETLPEDRILH (160 aa)) constitute a Helicase C-terminal domain. In terms of domain architecture, Dicer dsRNA-binding fold spans 652-742 (AIAILARYAS…NSIYHRRLPA (91 aa)). One can recognise a PAZ domain in the interval 892–1020 (DTVSFVHNND…ICAEPLRISA (129 aa)). RNase III domains are found at residues 1044 to 1203 (IALE…LSGG) and 1254 to 1406 (ARHV…VDSK). Positions 1295, 1392, and 1395 each coordinate Mg(2+). In terms of domain architecture, DRBM spans 1440 to 1508 (TFLHNKLTNE…SEKALAVLDG (69 aa)). Zn(2+) is bound by residues Cys-1452, His-1479, Cys-1520, and Cys-1522.

The protein belongs to the helicase family. Dicer subfamily. Mg(2+) is required as a cofactor. It depends on Mn(2+) as a cofactor.

Dicer-like endonuclease involved in cleaving double-stranded RNA in the RNA interference (RNAi) pathway. Produces 21 to 25 bp dsRNAs (siRNAs) which target the selective destruction of homologous RNAs leading to sequence-specific suppression of gene expression, called post-transcriptional gene silencing (PTGS). Part of a broad host defense response against viral infection and transposons. This Neosartorya fischeri (strain ATCC 1020 / DSM 3700 / CBS 544.65 / FGSC A1164 / JCM 1740 / NRRL 181 / WB 181) (Aspergillus fischerianus) protein is Dicer-like protein 1 (dcl1).